The chain runs to 200 residues: BREX protein BrxA (200 aa).

The protein belongs to the BrxA family.

Functionally, BREX systems (bacteriophage exclusion) provide immunity against bacteriophage. Part of a type 1 BREX system. This system allows phage adsorption but prevents phage DNA replication, without degradation of the phage DNA. Methylation of bacterial DNA by PglX probably guides self/non-self discrimination. When the brxA-brxB-brxC-pglX and pglZ-brxL operons are transformed into a susceptible B.subtilis strain (BEST7003) they confer resistance to bacteriophages SPbeta, SP16, Zeta, phi3T and SP02 and partial protection to phages SP01 and SP82G (these include lytic and temperate phage). They do not protect against phages phi105, rho10 or rho14. Additionally confers a very slight reduction in efficiency of plasmid transformation. The chain is BREX protein BrxA from Bacillus cereus (strain H3081.97).